We begin with the raw amino-acid sequence, 662 residues long: Probable quinol oxidase subunit 1 (662 aa).

2 helical membrane passes run 14-34 and 58-78; these read WMITMAQIGAPFLVIGLIAVI and IMYLICAVLMFVRGGIDALLI. His-102 is a Fe(II)-heme a binding site. The next 8 membrane-spanning stretches (helical) occupy residues 103–123, 140–160, 187–207, 228–248, 273–293, 311–331, 336–356, and 376–396; these read GVIMIIFMAMPFIFGLWNIVV, VSFWLFFAGMILFNLSFIIGG, IAIQISGLGTLATGINFFVTI, FITTLIVILAFPPLTVALALM, FFWVWGHPEVYIVILPAFGIY, MVWATAGIAFLSFLVWVHHFF, GALINSFFSISTMLIGIPTGV, and MLFSLAFIPNFLLGGVTGVML. Positions 279, 283, 328, and 329 each coordinate Cu cation. Positions 279 to 283 form a cross-link, 1'-histidyl-3'-tyrosine (His-Tyr); that stretch reads HPEVY. His-414 contributes to the heme a3 binding site. The next 5 membrane-spanning stretches (helical) occupy residues 415–435, 451–471, 493–513, 587–604, and 608–627; these read FHYTLVTGVVFACLAGLIFWY, CFWFFMIGFNVCFLPQFILGL, ISTIGALLMAIGFLFLVVSIV, PVGFWIGIFMTIGGFFLI, and VIPALICLFGIFGTMIYRSF. His-416 contributes to the Fe(II)-heme a binding site.

It belongs to the heme-copper respiratory oxidase family. Cu cation is required as a cofactor. It depends on ferriheme a as a cofactor. Heme A3. serves as cofactor.

The protein localises to the cell membrane. The enzyme catalyses 2 a quinol + O2 = 2 a quinone + 2 H2O. It functions in the pathway energy metabolism; oxidative phosphorylation. Catalyzes quinol oxidation with the concomitant reduction of oxygen to water. The sequence is that of Probable quinol oxidase subunit 1 (qoxB) from Staphylococcus aureus (strain USA300).